Consider the following 506-residue polypeptide: Maturase K (506 aa).

Belongs to the intron maturase 2 family. MatK subfamily.

Its subcellular location is the plastid. The protein resides in the chloroplast. In terms of biological role, usually encoded in the trnK tRNA gene intron. Probably assists in splicing its own and other chloroplast group II introns. The chain is Maturase K from Mentzelia lindleyi (Blazing star).